Reading from the N-terminus, the 241-residue chain is ATP synthase subunit a (241 aa).

A run of 7 helical transmembrane segments spans residues 27–47 (NCSLVMVLASVSSILLLCWAL), 52–72 (VVPGPSQTAVELIYGFVANTL), 87–107 (VMTTFLFVLACNLVGILPFGF), 112–132 (HLSVTLALSLVVCTAITVIGF), 142–162 (IFLPEGTPLWLAPMMVFIKLF), 175–195 (LAANMIAGHTIIAVIADFVLK), and 198–218 (LVLAPLPFAFIMGLIAFEIFV).

It belongs to the ATPase A chain family. In terms of assembly, F-type ATPases have 2 components, CF(1) - the catalytic core - and CF(0) - the membrane proton channel. CF(1) has five subunits: alpha(3), beta(3), gamma(1), delta(1), epsilon(1). CF(0) has three main subunits: a(1), b(2) and c(9-12). The alpha and beta chains form an alternating ring which encloses part of the gamma chain. CF(1) is attached to CF(0) by a central stalk formed by the gamma and epsilon chains, while a peripheral stalk is formed by the delta and b chains.

The protein localises to the cell inner membrane. Key component of the proton channel; it plays a direct role in the translocation of protons across the membrane. The sequence is that of ATP synthase subunit a from Anaplasma marginale (strain St. Maries).